The following is an 872-amino-acid chain: Protein translocase subunit SecA (872 aa).

Residues Gln-87, 105–109 (GEGKT), and Asp-510 contribute to the ATP site. Cys-847, Cys-849, Cys-858, and Cys-859 together coordinate Zn(2+).

The protein belongs to the SecA family. Monomer and homodimer. Part of the essential Sec protein translocation apparatus which comprises SecA, SecYEG and auxiliary proteins SecDF-YajC and YidC. Zn(2+) is required as a cofactor.

It is found in the cell inner membrane. Its subcellular location is the cytoplasm. The catalysed reaction is ATP + H2O + cellular proteinSide 1 = ADP + phosphate + cellular proteinSide 2.. Part of the Sec protein translocase complex. Interacts with the SecYEG preprotein conducting channel. Has a central role in coupling the hydrolysis of ATP to the transfer of proteins into and across the cell membrane, serving as an ATP-driven molecular motor driving the stepwise translocation of polypeptide chains across the membrane. In Aliarcobacter butzleri (strain RM4018) (Arcobacter butzleri), this protein is Protein translocase subunit SecA.